The sequence spans 531 residues: L-aspartate oxidase (531 aa).

Residues 11 to 14 (SGAA), K33, 40 to 47 (NSVYAQGG), 151 to 152 (TA), and D205 each bind FAD. R272 acts as the Proton donor/acceptor in catalysis. FAD is bound by residues E353 and 369–370 (SL).

The protein belongs to the FAD-dependent oxidoreductase 2 family. NadB subfamily. As to quaternary structure, monomer. Homodimer. Requires FAD as cofactor.

It localises to the cytoplasm. It catalyses the reaction L-aspartate + O2 = iminosuccinate + H2O2. The catalysed reaction is fumarate + L-aspartate = iminosuccinate + succinate. It functions in the pathway cofactor biosynthesis; NAD(+) biosynthesis; iminoaspartate from L-aspartate (oxidase route): step 1/1. Functionally, catalyzes the oxidation of L-aspartate to iminoaspartate, the first step in the de novo biosynthesis of NAD(+). Can use either oxygen or fumarate as electron acceptors, which allows the enzyme to be functional under aerobic and anaerobic conditions. This chain is L-aspartate oxidase, found in Bacillus subtilis (strain 168).